A 120-amino-acid polypeptide reads, in one-letter code: UPF0344 protein LMHCC_0278 (120 aa).

4 helical membrane passes run 3 to 23 (GYIHLISWVAIVVLTVTALLI), 33 to 53 (MLQMINRVFYILVILSGIMMV), 62 to 82 (ILAIFKILMGIIVIGVVEMLL), and 92 to 112 (GMFLMIFVIVVVITISLGFYL).

It belongs to the UPF0344 family.

It is found in the cell membrane. The sequence is that of UPF0344 protein LMHCC_0278 from Listeria monocytogenes serotype 4a (strain HCC23).